A 64-amino-acid polypeptide reads, in one-letter code: Large ribosomal subunit protein uL30 (64 aa).

Belongs to the universal ribosomal protein uL30 family. As to quaternary structure, part of the 50S ribosomal subunit.

This Rhodopseudomonas palustris (strain BisA53) protein is Large ribosomal subunit protein uL30.